We begin with the raw amino-acid sequence, 413 residues long: Serine hydroxymethyltransferase (413 aa).

Residues Leu-117 and 121–123 (GHL) each bind (6S)-5,6,7,8-tetrahydrofolate. Lys-226 bears the N6-(pyridoxal phosphate)lysine mark. (6S)-5,6,7,8-tetrahydrofolate contacts are provided by residues Glu-241 and 349 to 351 (SPF).

It belongs to the SHMT family. As to quaternary structure, homodimer. It depends on pyridoxal 5'-phosphate as a cofactor.

Its subcellular location is the cytoplasm. The enzyme catalyses (6R)-5,10-methylene-5,6,7,8-tetrahydrofolate + glycine + H2O = (6S)-5,6,7,8-tetrahydrofolate + L-serine. Its pathway is one-carbon metabolism; tetrahydrofolate interconversion. The protein operates within amino-acid biosynthesis; glycine biosynthesis; glycine from L-serine: step 1/1. In terms of biological role, catalyzes the reversible interconversion of serine and glycine with tetrahydrofolate (THF) serving as the one-carbon carrier. This reaction serves as the major source of one-carbon groups required for the biosynthesis of purines, thymidylate, methionine, and other important biomolecules. Also exhibits THF-independent aldolase activity toward beta-hydroxyamino acids, producing glycine and aldehydes, via a retro-aldol mechanism. The chain is Serine hydroxymethyltransferase from Halalkalibacterium halodurans (strain ATCC BAA-125 / DSM 18197 / FERM 7344 / JCM 9153 / C-125) (Bacillus halodurans).